A 161-amino-acid polypeptide reads, in one-letter code: Nucleotide-binding protein XOO0647 (161 aa).

This sequence belongs to the YajQ family.

Functionally, nucleotide-binding protein. The sequence is that of Nucleotide-binding protein XOO0647 from Xanthomonas oryzae pv. oryzae (strain MAFF 311018).